Consider the following 177-residue polypeptide: Large ribosomal subunit protein uL6 (177 aa).

Belongs to the universal ribosomal protein uL6 family. Part of the 50S ribosomal subunit.

This protein binds to the 23S rRNA, and is important in its secondary structure. It is located near the subunit interface in the base of the L7/L12 stalk, and near the tRNA binding site of the peptidyltransferase center. The polypeptide is Large ribosomal subunit protein uL6 (Buchnera aphidicola subsp. Acyrthosiphon kondoi (Acyrthosiphon kondoi symbiotic bacterium)).